Here is a 203-residue protein sequence, read N- to C-terminus: LexA repressor (203 aa).

The segment at residues 28–48 (VRELCDELGFKSPNTAHFHLK) is a DNA-binding region (H-T-H motif). Catalysis depends on for autocatalytic cleavage activity residues serine 122 and lysine 159.

Belongs to the peptidase S24 family. In terms of assembly, homodimer.

The enzyme catalyses Hydrolysis of Ala-|-Gly bond in repressor LexA.. Its function is as follows. Represses a number of genes involved in the response to DNA damage (SOS response), including recA and lexA. In the presence of single-stranded DNA, RecA interacts with LexA causing an autocatalytic cleavage which disrupts the DNA-binding part of LexA, leading to derepression of the SOS regulon and eventually DNA repair. This Desulfatibacillum aliphaticivorans protein is LexA repressor.